We begin with the raw amino-acid sequence, 452 residues long: UDP-N-acetylmuramate--L-alanine ligase (452 aa).

An ATP-binding site is contributed by 119–125 (GAHGKTS).

This sequence belongs to the MurCDEF family.

The protein localises to the cytoplasm. It catalyses the reaction UDP-N-acetyl-alpha-D-muramate + L-alanine + ATP = UDP-N-acetyl-alpha-D-muramoyl-L-alanine + ADP + phosphate + H(+). It functions in the pathway cell wall biogenesis; peptidoglycan biosynthesis. In terms of biological role, cell wall formation. In Streptococcus mutans serotype c (strain ATCC 700610 / UA159), this protein is UDP-N-acetylmuramate--L-alanine ligase.